The primary structure comprises 431 residues: 3-phosphoshikimate 1-carboxyvinyltransferase (431 aa).

3-phosphoshikimate contacts are provided by lysine 23, serine 24, and arginine 28. Phosphoenolpyruvate is bound at residue lysine 23. 2 residues coordinate phosphoenolpyruvate: glycine 96 and arginine 124. Positions 169, 171, 317, and 344 each coordinate 3-phosphoshikimate. A phosphoenolpyruvate-binding site is contributed by glutamine 171. Aspartate 317 (proton acceptor) is an active-site residue. The phosphoenolpyruvate site is built by arginine 348 and arginine 390.

Belongs to the EPSP synthase family. Monomer.

It is found in the cytoplasm. It carries out the reaction 3-phosphoshikimate + phosphoenolpyruvate = 5-O-(1-carboxyvinyl)-3-phosphoshikimate + phosphate. It functions in the pathway metabolic intermediate biosynthesis; chorismate biosynthesis; chorismate from D-erythrose 4-phosphate and phosphoenolpyruvate: step 6/7. Functionally, catalyzes the transfer of the enolpyruvyl moiety of phosphoenolpyruvate (PEP) to the 5-hydroxyl of shikimate-3-phosphate (S3P) to produce enolpyruvyl shikimate-3-phosphate and inorganic phosphate. This Syntrophotalea carbinolica (strain DSM 2380 / NBRC 103641 / GraBd1) (Pelobacter carbinolicus) protein is 3-phosphoshikimate 1-carboxyvinyltransferase.